We begin with the raw amino-acid sequence, 141 residues long: ATP synthase epsilon chain (141 aa).

Belongs to the ATPase epsilon chain family. As to quaternary structure, F-type ATPases have 2 components, CF(1) - the catalytic core - and CF(0) - the membrane proton channel. CF(1) has five subunits: alpha(3), beta(3), gamma(1), delta(1), epsilon(1). CF(0) has three main subunits: a, b and c.

Its subcellular location is the cell inner membrane. In terms of biological role, produces ATP from ADP in the presence of a proton gradient across the membrane. The chain is ATP synthase epsilon chain from Gluconacetobacter diazotrophicus (strain ATCC 49037 / DSM 5601 / CCUG 37298 / CIP 103539 / LMG 7603 / PAl5).